Consider the following 306-residue polypeptide: MELKDYYAIMGVKPTDDLKTIKTAYRRLARKYHPDVSKEPDAEARFKEVAEAWEVLSDEQRRAEYDQMWQHRNDPQFNRQFHHGDGQSFNAEDFDDIFSSIFGQHARQSRQRPAARGHDIEIEVAVFLEETLTEHKRTISYNLPVYNAFGMIEQEIPKTLNVKIPAGVGNGQRIRLKGQGTPDENGGPNGDLWLVIHIAPHPLFDIVGQDLEIVVPVSPWEAALGAKVTVPTLKESILLTIPPGSQAGQRLRVKGKGLVSKKQTGDLYAVLKIVMPPKPDENTAALWQQLADAQSSFDPRKDWGKA.

Positions D5–W69 constitute a J domain.

It localises to the cytoplasm. The protein localises to the nucleoid. In terms of biological role, DNA-binding protein that preferentially recognizes a curved DNA sequence. It is probably a functional analog of DnaJ; displays overlapping activities with DnaJ, but functions under different conditions, probably acting as a molecular chaperone in an adaptive response to environmental stresses other than heat shock. Lacks autonomous chaperone activity; binds native substrates and targets them for recognition by DnaK. Its activity is inhibited by the binding of CbpM. The protein is Curved DNA-binding protein of Shigella boydii serotype 18 (strain CDC 3083-94 / BS512).